We begin with the raw amino-acid sequence, 340 residues long: Pesticidal crystal protein Cry15Aa (340 aa).

Residues 318 to 340 form a disordered region; sequence RDYDKEHICHDQAEKYERDYDKE.

In terms of biological role, promotes colloidosmotic lysis by binding to the midgut epithelial cells of lepidopteran larvae. The protein is Pesticidal crystal protein Cry15Aa (cry15Aa) of Bacillus thuringiensis subsp. thompsoni.